A 94-amino-acid chain; its full sequence is DNA-directed RNA polymerase subunit omega (94 aa).

The protein belongs to the RNA polymerase subunit omega family. As to quaternary structure, the RNAP catalytic core consists of 2 alpha, 1 beta, 1 beta' and 1 omega subunit. When a sigma factor is associated with the core the holoenzyme is formed, which can initiate transcription.

The catalysed reaction is RNA(n) + a ribonucleoside 5'-triphosphate = RNA(n+1) + diphosphate. Promotes RNA polymerase assembly. Latches the N- and C-terminal regions of the beta' subunit thereby facilitating its interaction with the beta and alpha subunits. This chain is DNA-directed RNA polymerase subunit omega, found in Limosilactobacillus fermentum (strain NBRC 3956 / LMG 18251) (Lactobacillus fermentum).